Reading from the N-terminus, the 694-residue chain is Elongation factor G (694 aa).

The region spanning Asp9–Leu288 is the tr-type G domain. Residues Ala18–Thr25, Asp82–His86, and Asn136–Asp139 each bind GTP.

It belongs to the TRAFAC class translation factor GTPase superfamily. Classic translation factor GTPase family. EF-G/EF-2 subfamily.

Its subcellular location is the cytoplasm. Catalyzes the GTP-dependent ribosomal translocation step during translation elongation. During this step, the ribosome changes from the pre-translocational (PRE) to the post-translocational (POST) state as the newly formed A-site-bound peptidyl-tRNA and P-site-bound deacylated tRNA move to the P and E sites, respectively. Catalyzes the coordinated movement of the two tRNA molecules, the mRNA and conformational changes in the ribosome. In Chlamydia trachomatis serovar L2 (strain ATCC VR-902B / DSM 19102 / 434/Bu), this protein is Elongation factor G.